The following is an 852-amino-acid chain: Lon protease homolog 2, peroxisomal (852 aa).

Position 2 is an N-acetylserine (Ser-2). The Lon N-terminal domain maps to 13–222; it reads LPLLLTHEGV…MTIPLLVRQI (210 aa). 375–382 contacts ATP; it reads GPPGVGKT. The region spanning 651-837 is the Lon proteolytic domain; sequence LSQPGVAIGL…DEVLNAAFDG (187 aa). Active-site residues include Ser-743 and Lys-786. The Microbody targeting signal motif lies at 850-852; that stretch reads SKL.

Belongs to the peptidase S16 family. As to quaternary structure, interacts with PEX5. Interacts with TYSND1. May interact with enzymes involved in beta-oxidation of fatty acids, including ACOX1/AOX.

The protein resides in the peroxisome matrix. It catalyses the reaction Hydrolysis of proteins in presence of ATP.. Its function is as follows. ATP-dependent serine protease that mediates the selective degradation of misfolded and unassembled polypeptides in the peroxisomal matrix. Necessary for type 2 peroxisome targeting signal (PTS2)-containing protein processing and facilitates peroxisome matrix protein import. May indirectly regulate peroxisomal fatty acid beta-oxidation through degradation of the self-processed forms of TYSND1. The sequence is that of Lon protease homolog 2, peroxisomal from Pongo abelii (Sumatran orangutan).